The chain runs to 924 residues: Protein translocase subunit SecA (924 aa).

ATP contacts are provided by residues Q87, 105 to 109 (GEGKT), and D517. Residues 886–906 (VPAADRDPNDPSTWGKVGRNE) are disordered. 4 residues coordinate Zn(2+): C908, C910, C919, and H920.

The protein belongs to the SecA family. In terms of assembly, monomer and homodimer. Part of the essential Sec protein translocation apparatus which comprises SecA, SecYEG and auxiliary proteins SecDF-YajC and YidC. It depends on Zn(2+) as a cofactor.

The protein localises to the cell inner membrane. It localises to the cytoplasm. It catalyses the reaction ATP + H2O + cellular proteinSide 1 = ADP + phosphate + cellular proteinSide 2.. Its function is as follows. Part of the Sec protein translocase complex. Interacts with the SecYEG preprotein conducting channel. Has a central role in coupling the hydrolysis of ATP to the transfer of proteins into and across the cell membrane, serving both as a receptor for the preprotein-SecB complex and as an ATP-driven molecular motor driving the stepwise translocation of polypeptide chains across the membrane. This is Protein translocase subunit SecA from Azorhizobium caulinodans (strain ATCC 43989 / DSM 5975 / JCM 20966 / LMG 6465 / NBRC 14845 / NCIMB 13405 / ORS 571).